Reading from the N-terminus, the 1170-residue chain is Thrombospondin-2 (1170 aa).

The N-terminal stretch at 1–18 is a signal peptide; it reads MLWPLLLLALWAWPSAQA. Positions 19-215 constitute a Laminin G-like domain; sequence GDQDEDTAFD…LQNVYLVFEN (197 aa). The segment at 19–232 is heparin-binding; it reads GDQDEDTAFD…KKGCQQSQGA (214 aa). N-linked (GlcNAc...) asparagine glycans are attached at residues Asn151, Asn316, and Asn330. Residues 318 to 375 enclose the VWFC domain; sequence SACWQDGRFFAENETWVVDSCTKCTCKKFKTVCHQISCPPATCADPWFVEGECCPSCV. TSP type-1 domains lie at 379–429, 435–490, and 492–547; these read EEGW…GRCD, DGGW…PPCP, and DGRW…KSCP. Intrachain disulfides connect Cys391–Cys423, Cys395–Cys428, Cys406–Cys413, Cys447–Cys484, Cys451–Cys489, Cys462–Cys474, Cys504–Cys541, Cys508–Cys546, Cys519–Cys531, Cys551–Cys562, Cys556–Cys572, Cys575–Cys586, Cys592–Cys608, Cys599–Cys617, Cys620–Cys644, Cys650–Cys663, Cys657–Cys676, Cys678–Cys689, Cys705–Cys713, Cys718–Cys738, Cys754–Cys774, Cys777–Cys797, Cys813–Cys833, Cys836–Cys856, Cys874–Cys894, and Cys910–Cys930. N-linked (GlcNAc...) asparagine glycosylation occurs at Asn455. One can recognise an EGF-like 1 domain in the interval 547-587; the sequence is PIDGCLSNPCFPGAECSSFPDGSWSCGSCPGGFLGNGTHCE. The N-linked (GlcNAc...) asparagine glycan is linked to Asn582. In terms of domain architecture, EGF-like 2 spans 646-690; the sequence is PENPCKDKTHSCHRHAECIYLGHFSDPMYKCECQTGYAGDGLICG. TSP type-3 repeat units follow at residues 691 to 726, 727 to 762, 763 to 785, 786 to 821, 822 to 844, 845 to 882, 883 to 918, and 919 to 954; these read EDSDLDGWPNKNLVCATNATYHCVKDNCPLLPNSGQ, EDFDKDGIGDACDDDDDNDGVSDEKDNCQLLFNPRQ, FDYDKDEVGDRCDNCPYVHNPAQ, IDTDNNGEGDACSVDIDGDDVFNERDNCPYVYNTDQ, RDTDGDGVGDHCDNCPLVHNPDQ, TDVDNDLVGDQCDNNEDIDEDGHQNNQDNCPHIPNANQ, ADHDRDGQGDACDSDDDNDGIPDDRDNCRLVANPDQ, and EDSDGDRRGDACKDDFDNDSIPDIDDVCPENNAISE. Asn708 carries an N-linked (GlcNAc...) asparagine glycan. The segment at 731 to 750 is disordered; that stretch reads KDGIGDACDDDDDNDGVSDE. Acidic residues predominate over residues 737-747; it reads ACDDDDDNDGV. A disordered region spans residues 841-944; it reads NPDQTDVDND…DNDSIPDIDD (104 aa). 2 stretches are compositionally biased toward acidic residues: residues 845 to 864 and 894 to 903; these read TDVDNDLVGDQCDNNEDIDE and CDSDDDNDGI. A compositionally biased stretch (basic and acidic residues) spans 923–933; it reads GDRRGDACKDD. The Cell attachment site signature appears at 926-928; that stretch reads RGD. Residues 934-944 show a composition bias toward acidic residues; sequence FDNDSIPDIDD. Residues Asn936 and Asn1067 are each glycosylated (N-linked (GlcNAc...) asparagine). Cys946 and Cys1167 form a disulfide bridge. The 213-residue stretch at 958–1170 folds into the TSP C-terminal domain; that stretch reads RNFQMVHLDP…SDLKYECRDV (213 aa).

It belongs to the thrombospondin family. Homotrimer; disulfide-linked. Can bind to fibrinogen, fibronectin, laminin and type V collagen. Interacts (via the TSP type I repeats) with CD36; the interaction conveys an antiangiogenic effect. Interacts (via the TSP type I repeats) with HRG; the interaction blocks the antiangiogenic effect of THBS2 with CD36.

In terms of biological role, adhesive glycoprotein that mediates cell-to-cell and cell-to-matrix interactions. Ligand for CD36 mediating antiangiogenic properties. This is Thrombospondin-2 (THBS2) from Bos taurus (Bovine).